A 357-amino-acid chain; its full sequence is Magnesium-chelatase subunit ChlI (357 aa).

47-54 (GDRGTGKS) is a binding site for ATP.

This sequence belongs to the Mg-chelatase subunits D/I family.

The catalysed reaction is protoporphyrin IX + Mg(2+) + ATP + H2O = Mg-protoporphyrin IX + ADP + phosphate + 3 H(+). Its pathway is porphyrin-containing compound metabolism; chlorophyll biosynthesis. Its function is as follows. Involved in chlorophyll biosynthesis; introduces a magnesium ion into protoporphyrin IX to yield Mg-protoporphyrin IX. The chain is Magnesium-chelatase subunit ChlI (chlI) from Synechocystis sp. (strain ATCC 27184 / PCC 6803 / Kazusa).